Here is a 427-residue protein sequence, read N- to C-terminus: Anaerobic glycerol-3-phosphate dehydrogenase subunit B (427 aa).

This sequence belongs to the anaerobic G-3-P dehydrogenase subunit B family. Composed of a catalytic GlpA/B dimer and of membrane bound GlpC. Requires FMN as cofactor.

It catalyses the reaction a quinone + sn-glycerol 3-phosphate = dihydroxyacetone phosphate + a quinol. It participates in polyol metabolism; glycerol degradation via glycerol kinase pathway; glycerone phosphate from sn-glycerol 3-phosphate (anaerobic route): step 1/1. Functionally, conversion of glycerol 3-phosphate to dihydroxyacetone. Uses fumarate or nitrate as electron acceptor. The polypeptide is Anaerobic glycerol-3-phosphate dehydrogenase subunit B (Glaesserella parasuis serovar 5 (strain SH0165) (Haemophilus parasuis)).